Reading from the N-terminus, the 223-residue chain is MNLQRLSIFGTDNIGVYIYTNNKYTVVPRGLDSETKENIVQILGTELIEAEISRSFLLGIFISGNDNGILLPKSTIDDEFRFLKENLRDCRVEVLNSKVTALGNTILTNNKAALIYPEFNDIEEKIIKETLGVEEIRRGKIAQMITVGSVGVVTNKGGLVHVDTSEKELKELEKLFSVKIDIGTVNFGSVFIRSGLVANDKGTLVGASTTGPEILRIQKALGE.

It belongs to the eIF-6 family.

Its function is as follows. Binds to the 50S ribosomal subunit and prevents its association with the 30S ribosomal subunit to form the 70S initiation complex. The polypeptide is Translation initiation factor 6 (Saccharolobus islandicus (strain Y.N.15.51 / Yellowstone #2) (Sulfolobus islandicus)).